A 42-amino-acid chain; its full sequence is Photosystem I reaction center subunit IX (42 aa).

The helical transmembrane segment at 7-27 (FLSLGPVLLVLWLSVQATLLI) threads the bilayer.

This sequence belongs to the PsaJ family.

The protein resides in the cellular thylakoid membrane. In terms of biological role, may help in the organization of the PsaE and PsaF subunits. The chain is Photosystem I reaction center subunit IX from Gloeothece citriformis (strain PCC 7424) (Cyanothece sp. (strain PCC 7424)).